A 207-amino-acid polypeptide reads, in one-letter code: Zinc finger protein JAGGED-like (207 aa).

The segment covering 1-16 (MRADENNTLDLNNLPD) has biased composition (low complexity). The segment at 1–20 (MRADENNTLDLNNLPDDPSR) is disordered. The segment at 50–72 (YECRFCSLKFFKSQALGGHMNRH) adopts a C2H2-type zinc-finger fold.

Expressed in the emerging leaf, stamen and carpel primordia. Not expressed in the apical shoot meristem (SAM).

Its subcellular location is the nucleus. Its function is as follows. Acts with JAG to promote growth and patterning in stamens and carpels. Promotes the growth of the abaxial and adaxial sides of floral organs. Promotes the growth of the pollen-bearing microsporangia in anthers, the carpel walls of the gynoecium and the establishment of the correct number of cell layers in carpel walls. Promotes leaf blade growth and trichome development. In Arabidopsis thaliana (Mouse-ear cress), this protein is Zinc finger protein JAGGED-like (JGL).